The primary structure comprises 397 residues: MKIAYFDCAAGIAGDMCLGALLDCGVPLEYLNRQLQALGIEGEYGLQVSRVQRCGQPALQAVVEVLGSQSGGSLARHWAEIQALIAGSQLSPAIKARSLAVFEKLAQAEAKVHQMPVEEVHFHEVGAVDALVDIVGTCIGLDWLQVERVLSSPHPVGGGWVSTEHGKLAVPVPAVIELWEMGRVPVFSNGVEAELVTPTGAALAVALAEEFGPCPPMRVEKVGRGAGAQELPIPNVFRLWIGEANGGELTETVSVLQTQIDDLNPQVIAYTCEQLLALGAWDVFTQPITMKQGRPGILLTVICPPDRVPECQDLIFRETTTLGIRHFQQQRTLLERVVERVETPYGLVDIKVARHHGRIVNAQPEFRDCVARAQEFHVPVQTVWLAAQSAWQNRLQG.

This sequence belongs to the LarC family.

This Synechococcus sp. (strain JA-2-3B'a(2-13)) (Cyanobacteria bacterium Yellowstone B-Prime) protein is Putative nickel insertion protein.